The primary structure comprises 165 residues: Methylated-DNA--protein-cysteine methyltransferase (165 aa).

The Nucleophile; methyl group acceptor role is filled by C126.

It belongs to the MGMT family.

It is found in the cytoplasm. It catalyses the reaction a 6-O-methyl-2'-deoxyguanosine in DNA + L-cysteinyl-[protein] = S-methyl-L-cysteinyl-[protein] + a 2'-deoxyguanosine in DNA. The catalysed reaction is a 4-O-methyl-thymidine in DNA + L-cysteinyl-[protein] = a thymidine in DNA + S-methyl-L-cysteinyl-[protein]. Its function is as follows. Involved in the cellular defense against the biological effects of O6-methylguanine (O6-MeG) and O4-methylthymine (O4-MeT) in DNA. Repairs the methylated nucleobase in DNA by stoichiometrically transferring the methyl group to a cysteine residue in the enzyme. This is a suicide reaction: the enzyme is irreversibly inactivated. This chain is Methylated-DNA--protein-cysteine methyltransferase, found in Mycolicibacterium paratuberculosis (strain ATCC BAA-968 / K-10) (Mycobacterium paratuberculosis).